Here is a 656-residue protein sequence, read N- to C-terminus: MLMSQITIILPDNSTKVFDHEPTALEVAMSIGPRLAKETLGAKLNGSTEISDLRTVLKDQTKVALVTTKSPESVEVVRHSCAHIMAQAIQDIWPEVKVTIGPVIDNGFYYDFDSPFAFTEEHFEKIEKKMSEIVSKDLPIHREDWPIQKAIETFKGMNERFKVELIEDLAKKGETTVGIYFNGTSWFDLCRGPHIQSTGQIKAFKLLSVAGAYWRGDEKNAQLQRVYATAFNDKKDLETYLHNIEEAKKRDHRKLGKELGMFYFNELAPGSPFFTGKGATVYNSLQTYLRELYFETGYQEVITPQIFDVNLFHTSGHYQNYKENMFFTKVDERDFASKPMNCPSHCLLYNSEKYSYRDLPIKMADFGRLHRYEKSGAMHGLTRVRTFCQDDAHIFCRMDQLQEEIAKFMNLLNRVYDKLGMGNYKIFLSTRPDNRMGSEEYWDMAEGALAEALKSLNLPFELNPGDGAFYGPKLDIMFVDALNRPWQLGTLQVDPNLPQAFDLKYTGEDNKEHRPVMLHRAILGSLERFIGVYLEHTAGHLPPWMMPVQVAILNVTDRVNSFCEELQNSLKGHSVRVEFDRRNEKLNYKIREAQLQKIPYMIIVGDKEAESRTVSLRLRDGSEHKGLTVDQVMNLITTDIKTRSLQSSLAKSATTN.

In terms of domain architecture, TGS spans 2–67 (LMSQITIILP…KDQTKVALVT (66 aa)). The tract at residues 251–542 (DHRKLGKELG…YLEHTAGHLP (292 aa)) is catalytic. Zn(2+)-binding residues include cysteine 342, histidine 393, and histidine 519.

Belongs to the class-II aminoacyl-tRNA synthetase family. As to quaternary structure, homodimer. Zn(2+) serves as cofactor.

It localises to the cytoplasm. It carries out the reaction tRNA(Thr) + L-threonine + ATP = L-threonyl-tRNA(Thr) + AMP + diphosphate + H(+). Its function is as follows. Catalyzes the attachment of threonine to tRNA(Thr) in a two-step reaction: L-threonine is first activated by ATP to form Thr-AMP and then transferred to the acceptor end of tRNA(Thr). Also edits incorrectly charged L-seryl-tRNA(Thr). The polypeptide is Threonine--tRNA ligase (Bdellovibrio bacteriovorus (strain ATCC 15356 / DSM 50701 / NCIMB 9529 / HD100)).